A 467-amino-acid chain; its full sequence is Glycogen synthase kinase-3 (467 aa).

Positions methionine 1–asparagine 20 are enriched in basic and acidic residues. A disordered region spans residues methionine 1–asparagine 42. The span at threonine 23 to serine 37 shows a compositional bias: low complexity. Positions tyrosine 56–phenylalanine 339 constitute a Protein kinase domain. ATP-binding positions include isoleucine 62–valine 70 and lysine 85. The active-site Proton acceptor is aspartate 179. Phosphotyrosine; by zakA occurs at positions 214 and 220. The interval serine 400–histidine 467 is disordered.

This sequence belongs to the protein kinase superfamily. CMGC Ser/Thr protein kinase family. GSK-3 subfamily. Mg(2+) serves as cofactor.

The enzyme catalyses L-seryl-[tau protein] + ATP = O-phospho-L-seryl-[tau protein] + ADP + H(+). It catalyses the reaction L-threonyl-[tau protein] + ATP = O-phospho-L-threonyl-[tau protein] + ADP + H(+). Inhibited by lithium. Lithium inhibition is competitive with respect to magnesium but non-competitive with respect to the peptide substrate. During cellular differentiation, may mediate an extracellular cyclic AMP stimulated signal transduction pathway that regulates prespore and prestalk B-cell proportions through inhibition of stalk cell formation and induction of prespore cell differentiation. The cAMP receptor carC appears to activate gskA via the tyrosine kinases zakA and zak2, to stimulate prespore differentiation, while carD appears to negatively regulate gskA, to promote prestalk formation. The protein is Glycogen synthase kinase-3 (gskA) of Dictyostelium discoideum (Social amoeba).